The sequence spans 319 residues: Acyl-coenzyme A thioesterase 8 (319 aa).

Positions 1–20 (MSSPQAPEDGQGCGDRGDPP) are disordered. Residues Asp-232, Ser-254, and Gln-304 each act as charge relay system in the active site. Positions 317–319 (SKL) match the Microbody targeting signal motif.

It belongs to the C/M/P thioester hydrolase family. As to quaternary structure, homodimer. (Microbial infection) Interacts with human immunodeficiency virus (HIV-1) Nef (via middle region); this interaction enhances ACOT8 Acyl-CoA thioesterase activity and occurs in a Nef myristoylation-independent manner. According to a second report, the interaction with HIV-1 Nef occurs in a Nef myristoylation-independent manner but does not enhance ACOT8 Acyl-CoA thioesterase activity. As to expression, detected in a T-cell line (at protein level). Ubiquitous.

It is found in the peroxisome matrix. The catalysed reaction is choloyl-CoA + H2O = cholate + CoA + H(+). It catalyses the reaction chenodeoxycholoyl-CoA + H2O = chenodeoxycholate + CoA + H(+). The enzyme catalyses acetyl-CoA + H2O = acetate + CoA + H(+). It carries out the reaction butanoyl-CoA + H2O = butanoate + CoA + H(+). The catalysed reaction is 2-methylpropanoyl-CoA + H2O = 2-methylpropanoate + CoA + H(+). It catalyses the reaction hexanoyl-CoA + H2O = hexanoate + CoA + H(+). The enzyme catalyses octanoyl-CoA + H2O = octanoate + CoA + H(+). It carries out the reaction decanoyl-CoA + H2O = decanoate + CoA + H(+). The catalysed reaction is dodecanoyl-CoA + H2O = dodecanoate + CoA + H(+). It catalyses the reaction tetradecanoyl-CoA + H2O = tetradecanoate + CoA + H(+). The enzyme catalyses hexadecanoyl-CoA + H2O = hexadecanoate + CoA + H(+). It carries out the reaction octadecanoyl-CoA + H2O = octadecanoate + CoA + H(+). The catalysed reaction is malonyl-CoA + H2O = malonate + CoA + H(+). It catalyses the reaction acetoacetyl-CoA + H2O = acetoacetate + CoA + H(+). The enzyme catalyses propanoyl-CoA + H2O = propanoate + CoA + H(+). It carries out the reaction succinyl-CoA + H2O = succinate + CoA + H(+). The catalysed reaction is glutaryl-CoA + H2O = glutarate + CoA + H(+). It catalyses the reaction hexanedioyl-CoA + H2O = hexanedioate + CoA + H(+). The enzyme catalyses octanedioyl-CoA + H2O = octanedioate + CoA + H(+). It carries out the reaction decanedioyl-CoA + H2O = decanedioate + CoA + H(+). The catalysed reaction is dodecanedioyl-CoA + H2O = dodecanedioate + CoA + H(+). It catalyses the reaction (9Z)-tetradecenoyl-CoA + H2O = (9Z)-tetradecenoate + CoA + H(+). The enzyme catalyses (9Z)-hexadecenoyl-CoA + H2O = (9Z)-hexadecenoate + CoA + H(+). It carries out the reaction (9Z)-octadecenoyl-CoA + H2O = (9Z)-octadecenoate + CoA + H(+). The catalysed reaction is (9Z,12Z)-octadecadienoyl-CoA + H2O = (9Z,12Z)-octadecadienoate + CoA + H(+). It catalyses the reaction eicosanoyl-CoA + H2O = eicosanoate + CoA + H(+). The enzyme catalyses (5Z,8Z,11Z,14Z)-eicosatetraenoyl-CoA + H2O = (5Z,8Z,11Z,14Z)-eicosatetraenoate + CoA + H(+). It carries out the reaction 4,8-dimethylnonanoyl-CoA + H2O = 4,8-dimethylnonanoate + CoA + H(+). The catalysed reaction is 2,6-dimethylheptanoyl-CoA + H2O = 2,6-dimethylheptanoate + CoA + H(+). It catalyses the reaction (3S)-3-hydroxy-3-methylglutaryl-CoA + H2O = 3-hydroxy-3-methylglutarate + CoA + H(+). The enzyme catalyses 3alpha,7alpha,12alpha-trihydroxy-5beta-cholestan-26-oyl-CoA + H2O = 3alpha,7alpha,12alpha-trihydroxy-5beta-cholestan-26-oate + CoA + H(+). It carries out the reaction 2-methyloctadecanoyl-CoA + H2O = 2-methyloctadecanoate + CoA + H(+). The catalysed reaction is prostaglandin F2alpha-CoA + H2O = prostaglandin F2alpha + CoA + H(+). The protein operates within lipid metabolism; fatty acid metabolism. Inhibited by CoASH (IC(50)=10-15 uM). Also inhibited by cysteine-reactive agents. Catalyzes the hydrolysis of acyl-CoAs into free fatty acids and coenzyme A (CoASH), regulating their respective intracellular levels. Displays no strong substrate specificity with respect to the carboxylic acid moiety of Acyl-CoAs. Hydrolyzes medium length (C2 to C20) straight-chain, saturated and unsaturated acyl-CoAS but is inactive towards substrates with longer aliphatic chains. Moreover, it catalyzes the hydrolysis of CoA esters of bile acids, such as choloyl-CoA and chenodeoxycholoyl-CoA and competes with bile acid CoA:amino acid N-acyltransferase (BAAT). Is also able to hydrolyze CoA esters of dicarboxylic acids. It is involved in the metabolic regulation of peroxisome proliferation. In terms of biological role, (Microbial infection) May mediate Nef-induced down-regulation of CD4 cell-surface expression. This chain is Acyl-coenzyme A thioesterase 8 (ACOT8), found in Homo sapiens (Human).